Consider the following 231-residue polypeptide: Putative cobalt transport protein CbiM 1 (231 aa).

Helical transmembrane passes span 6–26 (GFLPIGWCVFWAVLAAPFLIY), 41–61 (VLPLMAVCGAFIFVVSLVDIP), 79–99 (FFGPAVTSVLGLIILVFQALL), 107–127 (TLGATAFSMAVMGPLAAWLVF), 136–156 (VPLGPAVFCAAVVANCVTYLI), and 172–192 (LTAFLAAAAVFAVVQIPISII).

This sequence belongs to the CbiM family. As to quaternary structure, forms an energy-coupling factor (ECF) transporter complex composed of an ATP-binding protein (A component, CbiO), a transmembrane protein (T component, CbiQ) and 2 possible substrate-capture proteins (S components, CbiM and CbiN) of unknown stoichimetry.

The protein resides in the cell membrane. Its pathway is cofactor biosynthesis; adenosylcobalamin biosynthesis. Part of the energy-coupling factor (ECF) transporter complex CbiMNOQ involved in cobalt import. In Methanocorpusculum labreanum (strain ATCC 43576 / DSM 4855 / Z), this protein is Putative cobalt transport protein CbiM 1.